The sequence spans 401 residues: Acetate kinase (401 aa).

Asparagine 7 is a binding site for Mg(2+). ATP is bound at residue lysine 14. A substrate-binding site is contributed by arginine 90. Aspartate 147 acts as the Proton donor/acceptor in catalysis. ATP-binding positions include 207–211 (HLGNG), 282–284 (DFR), and 330–334 (GVGEN). Glutamate 383 lines the Mg(2+) pocket.

This sequence belongs to the acetokinase family. Homodimer. It depends on Mg(2+) as a cofactor. The cofactor is Mn(2+).

The protein localises to the cytoplasm. The catalysed reaction is acetate + ATP = acetyl phosphate + ADP. It participates in metabolic intermediate biosynthesis; acetyl-CoA biosynthesis; acetyl-CoA from acetate: step 1/2. Its function is as follows. Catalyzes the formation of acetyl phosphate from acetate and ATP. Can also catalyze the reverse reaction. The sequence is that of Acetate kinase from Clostridium novyi (strain NT).